The sequence spans 227 residues: MAEEQQNSDQSNGGNVIPTPEEVATFLHKTVEEGGWEKCWEEEITPWDQGRATPLIVHLVDTSSLPLGRALVPGCGGGHDVVAMASPERFVVGLDISESALAKANETYGSSPKAEYFSFVKEDVFTWRPTELFDLIFDYVFFCAIEPEMRPAWAKSMYELLKPDGELITLMYPITDHVGGPPYKVDVSTFEEVLVPIGFKAVSVEENPHAIPTRKGKEKLGRWKKIN.

Trp36, Trp40, Trp47, and Gly74 together coordinate S-adenosyl-L-methionine. The residue at position 86 (Ser86) is a Phosphoserine. S-adenosyl-L-methionine is bound by residues Asp95, Asp123–Val124, and Tyr139.

The protein belongs to the class I-like SAM-binding methyltransferase superfamily. TPMT family. Expressed in shoots, leaves, stems, inflorescences, flowers and green siliques.

The enzyme catalyses thiocyanate + S-adenosyl-L-methionine = methyl thiocyanate + S-adenosyl-L-homocysteine. Its function is as follows. S-adenosyl-L-methionine-dependent methyltransferase. Involved in glucosinolate metabolism and defense against phytopathogens. Highly reactive to thiocyanate (NCS(-)) derived from myrosinase-mediated hydrolysis of glucosinolates upon tissue damage. This is Thiocyanate methyltransferase 1 from Arabidopsis thaliana (Mouse-ear cress).